The sequence spans 647 residues: Centrosomal protein of 72 kDa (647 aa).

LRR repeat units follow at residues 29 to 50 (ELQS…GHSL), 55 to 76 (GLKS…QYLT), and 77 to 98 (ALES…FRLH). The 40-residue stretch at 111–150 (NPVVKVEPDYRLFVVHLLPKLQQLDDRPVRASERKASRLH) folds into the LRRCT domain. 2 stretches are compositionally biased toward basic and acidic residues: residues 152–161 (ASEDSLDSKE) and 220–234 (KGRE…ESRH). Disordered regions lie at residues 152–176 (ASED…HHPR), 211–256 (PPGS…RETR), and 285–413 (PEAS…ALPG). Ser237 carries the phosphoserine modification. Basic and acidic residues predominate over residues 366-377 (SLSRQDSSESRN). Ser382 carries the phosphoserine modification. A compositionally biased stretch (basic and acidic residues) spans 390-402 (EEQRSRGVTDTRE). At Ser404 the chain carries Phosphoserine. Residues 476–620 (SLALESKSLQ…AQHRAEVEQM (145 aa)) are a coiled coil.

It belongs to the CEP72 family. As to quaternary structure, interacts with KIZ, PCM1 and CDK5RAP2.

It localises to the cytoplasm. It is found in the cytoskeleton. Its subcellular location is the microtubule organizing center. The protein resides in the centrosome. The protein localises to the centriolar satellite. In terms of biological role, involved in the recruitment of key centrosomal proteins to the centrosome. Provides centrosomal microtubule-nucleation activity on the gamma-tubulin ring complexes (gamma-TuRCs) and has critical roles in forming a focused bipolar spindle, which is needed for proper tension generation between sister chromatids. Required for localization of KIZ, AKAP9 and gamma-tubulin ring complexes (gamma-TuRCs). Involved in centriole duplication. Required for CDK5RAP22, CEP152, WDR62 and CEP63 centrosomal localization and promotes the centrosomal localization of CDK2. The polypeptide is Centrosomal protein of 72 kDa (CEP72) (Homo sapiens (Human)).